Reading from the N-terminus, the 280-residue chain is Probable inactive shikimate kinase like 1, chloroplastic (280 aa).

Residues 1-54 constitute a chloroplast transit peptide; the sequence is MEIFSASASLTLTGFVPRLLPLLSPQARTTLCKPLLSSSSTRLISCHSRIAPSR.

It belongs to the shikimate kinase family.

The protein resides in the plastid. Its subcellular location is the chloroplast. Functionally, required for chloroplast biogenesis. This is Probable inactive shikimate kinase like 1, chloroplastic (SKL1) from Arabidopsis thaliana (Mouse-ear cress).